Reading from the N-terminus, the 502-residue chain is Probable mRNA-splicing protein ubp10 (502 aa).

Residues 56 to 153 (SQNLYLDTIN…YVMRPTFTKL (98 aa)) form a UBP-type; degenerate zinc finger. Residues C89, C92, H108, and H114 each coordinate Zn(2+). The USP domain occupies 178–501 (VGMNNIKNND…ESFIQLWERS (324 aa)).

Belongs to the peptidase C19 family.

The protein localises to the nucleus. Functionally, may play a role in mRNA splicing. It is unsure if the protein really exhibits hydrolase activity. Could be a competitor of ubiquitin C-terminal hydrolases (UCHs). This chain is Probable mRNA-splicing protein ubp10 (ubp10), found in Schizosaccharomyces pombe (strain 972 / ATCC 24843) (Fission yeast).